We begin with the raw amino-acid sequence, 436 residues long: Magnesium transporter MRS2-4 (436 aa).

The segment at 1 to 56 (MGKGPLSFRRLSSIRHRKKGSAVKDDSAQTSTPSSPPPPLPIHAGGSAVGATGKAK) is disordered. Residues 12–21 (SSIRHRKKGS) show a composition bias toward basic residues. The segment covering 44 to 53 (AGGSAVGATG) has biased composition (low complexity). 2 consecutive transmembrane segments (helical) span residues 372–392 (LTLTIASFAIAAETLLASLFG) and 405–425 (VFGYFVWSVTALCIVLFMVTL). Residues 392–394 (GMN) carry the Required for magnesium transport activity motif.

The protein belongs to the CorA metal ion transporter (MIT) (TC 1.A.35.5) family. In terms of tissue distribution, expressed in the whole plant except roots.

Its subcellular location is the membrane. Functionally, magnesium transporter that may mediate the influx of magnesium. The chain is Magnesium transporter MRS2-4 (MRS2-4) from Arabidopsis thaliana (Mouse-ear cress).